A 768-amino-acid chain; its full sequence is Probable LRR receptor-like serine/threonine-protein kinase At4g37250 (768 aa).

Residues 1-21 (MRMELISVIFFFFCSVLSSSA) form the signal peptide. The Extracellular segment spans residues 22–328 (LNSDGLVLMK…PNPRTGLRPG (307 aa)). The N-linked (GlcNAc...) asparagine glycan is linked to Asn64. LRR repeat units lie at residues 67–90 (KVLT…GSLL), 91–112 (TLQS…SFFN), 115–137 (ELRF…IGDL), 139–162 (NLLT…ASLR), 163–183 (NLTV…GGWR), 184–206 (VVEF…FGGY), 207–229 (SLQY…IGVN), and 232–254 (RNVT…PVFL). Asn99 is a glycosylation site (N-linked (GlcNAc...) asparagine). N-linked (GlcNAc...) asparagine glycosylation is found at Asn144, Asn163, Asn196, Asn212, Asn233, and Asn242. The tract at residues 301–324 (PNTIGSNPVTDPNSQQTDPNPRTG) is disordered. Positions 303–320 (TIGSNPVTDPNSQQTDPN) are enriched in polar residues. The helical transmembrane segment at 329–349 (VIIGIVVGDIAGIGILAVIFL) threads the bilayer. The Cytoplasmic portion of the chain corresponds to 350–768 (YIYRCKKNKI…IKSSSFHYGH (419 aa)). The tract at residues 361–432 (DNNNNDKQRT…NANQRSGDNK (72 aa)) is disordered. Low complexity predominate over residues 378-387 (STFSSSSSSP). The span at 407-420 (PSEEEDEDDEDEES) shows a compositional bias: acidic residues. The 308-residue stretch at 449-756 (KASAYILGAT…AVLERFHPNS (308 aa)) folds into the Protein kinase domain. Residues Ser451 and Ser531 each carry the phosphoserine modification. At Thr553 the chain carries Phosphothreonine. The residue at position 662 (Ser662) is a Phosphoserine.

The protein belongs to the protein kinase superfamily. Ser/Thr protein kinase family.

It is found in the membrane. It catalyses the reaction L-seryl-[protein] + ATP = O-phospho-L-seryl-[protein] + ADP + H(+). The enzyme catalyses L-threonyl-[protein] + ATP = O-phospho-L-threonyl-[protein] + ADP + H(+). This is Probable LRR receptor-like serine/threonine-protein kinase At4g37250 from Arabidopsis thaliana (Mouse-ear cress).